The chain runs to 92 residues: UPF0223 protein SPy_1248/M5005_Spy0958 (92 aa).

The protein belongs to the UPF0223 family.

The sequence is that of UPF0223 protein SPy_1248/M5005_Spy0958 from Streptococcus pyogenes serotype M1.